A 430-amino-acid chain; its full sequence is Enolase (430 aa).

Q167 contacts (2R)-2-phosphoglycerate. E209 serves as the catalytic Proton donor. 3 residues coordinate Mg(2+): D245, E286, and D313. Residues K338, R367, S368, and K389 each contribute to the (2R)-2-phosphoglycerate site. Catalysis depends on K338, which acts as the Proton acceptor.

It belongs to the enolase family. Mg(2+) is required as a cofactor.

Its subcellular location is the cytoplasm. It localises to the secreted. The protein localises to the cell surface. It carries out the reaction (2R)-2-phosphoglycerate = phosphoenolpyruvate + H2O. Its pathway is carbohydrate degradation; glycolysis; pyruvate from D-glyceraldehyde 3-phosphate: step 4/5. In terms of biological role, catalyzes the reversible conversion of 2-phosphoglycerate (2-PG) into phosphoenolpyruvate (PEP). It is essential for the degradation of carbohydrates via glycolysis. This chain is Enolase, found in Synechococcus sp. (strain CC9605).